The sequence spans 408 residues: Peptidase T (408 aa).

H78 serves as a coordination point for Zn(2+). D80 is a catalytic residue. D140 serves as a coordination point for Zn(2+). The active-site Proton acceptor is E174. E175, D197, and H379 together coordinate Zn(2+).

Belongs to the peptidase M20B family. Requires Zn(2+) as cofactor.

It is found in the cytoplasm. It carries out the reaction Release of the N-terminal residue from a tripeptide.. Its function is as follows. Cleaves the N-terminal amino acid of tripeptides. The sequence is that of Peptidase T from Staphylococcus aureus (strain Mu3 / ATCC 700698).